The primary structure comprises 515 residues: Fatty acyl-CoA reductase 2 (515 aa).

The Cytoplasmic portion of the chain corresponds to 1 to 465 (MSMIAAFYGG…AKQHLKRLRN (465 aa)). The chain crosses the membrane as a helical span at residues 466-484 (IHYLFNTALFLIAWRLLIA). The Peroxisomal segment spans residues 485-515 (RSQVARNVWFFIVSFCYKFLSYFRASSTLNV).

The protein belongs to the fatty acyl-CoA reductase family.

It localises to the peroxisome membrane. The enzyme catalyses a long-chain fatty acyl-CoA + 2 NADPH + 2 H(+) = a long-chain primary fatty alcohol + 2 NADP(+) + CoA. It carries out the reaction hexadecanoyl-CoA + 2 NADPH + 2 H(+) = hexadecan-1-ol + 2 NADP(+) + CoA. It catalyses the reaction octadecanoyl-CoA + 2 NADPH + 2 H(+) = octadecan-1-ol + 2 NADP(+) + CoA. The catalysed reaction is a very long-chain fatty acyl-CoA + 2 NADPH + 2 H(+) = a very long-chain primary fatty alcohol + 2 NADP(+) + CoA. The enzyme catalyses an ultra-long-chain fatty acyl-CoA + 2 NADPH + 2 H(+) = an ultra long-chain primary fatty alcohol + 2 NADP(+) + CoA. It carries out the reaction eicosanoyl-CoA + 2 NADPH + 2 H(+) = eicosan-1-ol + 2 NADP(+) + CoA. It catalyses the reaction docosanoyl-CoA + 2 NADPH + 2 H(+) = docosan-1-ol + 2 NADP(+) + CoA. The catalysed reaction is tetracosanoyl-CoA + 2 NADPH + 2 H(+) = tetracosan-1-ol + 2 NADP(+) + CoA. The enzyme catalyses hexacosanoyl-CoA + 2 NADPH + 2 H(+) = hexacosan-1-ol + 2 NADP(+) + CoA. It carries out the reaction octacosanoyl-CoA + 2 NADPH + 2 H(+) = octacosan-1-ol + 2 NADP(+) + CoA. It catalyses the reaction triacontanoyl-CoA + 2 NADPH + 2 H(+) = triacontan-1-ol + 2 NADP(+) + CoA. The catalysed reaction is 18-methylnonadecanoyl-CoA + 2 NADPH + 2 H(+) = 18-methylnonadecan-1-ol + 2 NADP(+) + CoA. The enzyme catalyses 20-methylheneicosanoyl-CoA + 2 NADPH + 2 H(+) = 20-methylheneicosan-1-ol + 2 NADP(+) + CoA. It carries out the reaction 22-methyltricosanoyl-CoA + 2 NADPH + 2 H(+) = 22-methyltricosan-1-ol + 2 NADP(+) + CoA. It catalyses the reaction 24-methylpentacosanoyl-CoA + 2 NADPH + 2 H(+) = 24-methylpentacosan-1-ol + 2 NADP(+) + CoA. Its function is as follows. Catalyzes the reduction of saturated but not unsaturated C16 or C18 fatty acyl-CoA to fatty alcohols (FAls). A lower activity can be observed with shorter fatty acyl-CoA substrates. Can produce very long-chain and ultra long-chain FAls, regardless of whether they have a straight or branched chain. Involved in the production of ether lipids/plasmalogens and wax monoesters whose synthesis requires FAls as substrates. The polypeptide is Fatty acyl-CoA reductase 2 (Bos taurus (Bovine)).